Reading from the N-terminus, the 335-residue chain is Cathepsin B-like cysteine proteinase 4 (335 aa).

Residues 1–15 (MKYLILAALVAVTAG) form the signal peptide. Positions 16–80 (LVIPLVPKTQ…VVKHDINEDT (65 aa)) are excised as a propeptide. Intrachain disulfides connect cysteine 94/cysteine 123, cysteine 106/cysteine 150, cysteine 142/cysteine 209, cysteine 143/cysteine 146, cysteine 179/cysteine 213, and cysteine 187/cysteine 199. Cysteine 109 is a catalytic residue. N-linked (GlcNAc...) asparagine glycosylation occurs at asparagine 193. Catalysis depends on residues histidine 281 and asparagine 301.

The protein belongs to the peptidase C1 family.

It localises to the secreted. Thiol protease which shows activity against the fluorogenic substrate z-Arg-Arg-AMC. This Caenorhabditis elegans protein is Cathepsin B-like cysteine proteinase 4 (cpr-4).